The primary structure comprises 429 residues: Argininosuccinate lyase (429 aa).

The protein belongs to the lyase 1 family. Argininosuccinate lyase subfamily.

It localises to the cytoplasm. The catalysed reaction is 2-(N(omega)-L-arginino)succinate = fumarate + L-arginine. The protein operates within amino-acid biosynthesis; L-arginine biosynthesis; L-arginine from L-ornithine and carbamoyl phosphate: step 3/3. The polypeptide is Argininosuccinate lyase (Pyrobaculum neutrophilum (strain DSM 2338 / JCM 9278 / NBRC 100436 / V24Sta) (Thermoproteus neutrophilus)).